A 92-amino-acid chain; its full sequence is Nodulation protein F (92 aa).

A Carrier domain is found at 4–88 (QLTLEIISAI…DVVEAVRGLL (85 aa)). Ser45 carries the post-translational modification O-(pantetheine 4'-phosphoryl)serine.

In terms of processing, 4'-phosphopantetheine is transferred from CoA to a specific serine of apo-NodF.

Its function is as follows. Proposed to synthesize nod factor fatty acyl chain. Involved in trans-2,trans-4,trans-6,cis-11-octadecatetraenoic acid biosynthesis. The polypeptide is Nodulation protein F (nodF) (Rhizobium leguminosarum bv. viciae).